The primary structure comprises 203 residues: Pyridoxine/pyridoxamine 5'-phosphate oxidase (203 aa).

FMN contacts are provided by residues 50-55 (RMVLLK), 65-66 (YT), lysine 71, lysine 72, and glutamine 94. Lysine 55 contributes to the substrate binding site. Substrate-binding residues include tyrosine 112, arginine 116, and serine 120. FMN contacts are provided by residues 129 to 130 (QS) and tryptophan 174. 180-182 (RLH) provides a ligand contact to substrate. Arginine 184 contacts FMN.

The protein belongs to the pyridoxamine 5'-phosphate oxidase family. As to quaternary structure, homodimer. FMN serves as cofactor.

It catalyses the reaction pyridoxamine 5'-phosphate + O2 + H2O = pyridoxal 5'-phosphate + H2O2 + NH4(+). The enzyme catalyses pyridoxine 5'-phosphate + O2 = pyridoxal 5'-phosphate + H2O2. It functions in the pathway cofactor metabolism; pyridoxal 5'-phosphate salvage; pyridoxal 5'-phosphate from pyridoxamine 5'-phosphate: step 1/1. It participates in cofactor metabolism; pyridoxal 5'-phosphate salvage; pyridoxal 5'-phosphate from pyridoxine 5'-phosphate: step 1/1. Its function is as follows. Catalyzes the oxidation of either pyridoxine 5'-phosphate (PNP) or pyridoxamine 5'-phosphate (PMP) into pyridoxal 5'-phosphate (PLP). The polypeptide is Pyridoxine/pyridoxamine 5'-phosphate oxidase (Brucella canis (strain ATCC 23365 / NCTC 10854 / RM-666)).